We begin with the raw amino-acid sequence, 276 residues long: Putative glycosyltransferase 6 domain-containing protein 1 (276 aa).

Topologically, residues 1-6 (MNSKRM) are cytoplasmic. Residues 7–23 (LLLVLFAFSLMLVERYF) form a helical; Signal-anchor for type II membrane protein membrane-spanning segment. The Lumenal portion of the chain corresponds to 24 to 276 (RNHQVEELRL…NKYFYLNKPT (253 aa)). N-linked (GlcNAc...) asparagine glycosylation is present at N74. Substrate contacts are provided by residues 82-87 (FATGRF), 173-175 (AAN), and 195-198 (HAWW). Residue E263 is the Nucleophile of the active site.

Belongs to the glycosyltransferase 6 family. Mn(2+) is required as a cofactor. Expressed in both healthy and inflamed gingival tissue samples at similar levels, with higher expression in the gingival connective tissue compared to gingival epithelium. Strongest expression in testis, followed by leukocytes.

Its subcellular location is the membrane. This Homo sapiens (Human) protein is Putative glycosyltransferase 6 domain-containing protein 1 (GLT6D1).